The following is a 551-amino-acid chain: Cleavage and polyadenylation specificity factor subunit 6 (551 aa).

Residues 1–213 (MADGVDHIDI…RGRFPGAVPG (213 aa)) are necessary for interaction with NXF1. In terms of domain architecture, RRM spans 81 to 161 (IALYIGNLTW…QNPVVTPCNK (81 aa)). Positions 81–161 (IALYIGNLTW…QNPVVTPCNK (81 aa)) are necessary for interaction with NUDT21/CPSF5. Residues 81-161 (IALYIGNLTW…QNPVVTPCNK (81 aa)) are necessary for nuclear paraspeckles localization. At threonine 157 the chain carries Phosphothreonine. The span at 169 to 180 (MQSRKTTQSGQM) shows a compositional bias: polar residues. 2 disordered regions span residues 169-411 (MQSR…PLSE) and 477-551 (LHGI…YRHR). A GAR motif is present at residues 202–206 (RGRGR). Residues 207 to 219 (FPGAVPGGDRFPG) show a composition bias toward low complexity. Pro residues-rich tracts occupy residues 220 to 265 (PAGP…PLAG), 285 to 366 (GQPP…PPPT), and 377 to 388 (GPPPTDPYGRPP). Residues 389-404 (PYDRGDYGPPGREMDT) are compositionally biased toward basic and acidic residues. Phosphothreonine is present on residues threonine 404 and threonine 407. The sufficient for nuclear speckle localization stretch occupies residues 404–551 (TARTPLSEAE…RDREREYRHR (148 aa)). Positions 405–551 (ARTPLSEAEF…RDREREYRHR (147 aa)) are necessary for RNA-binding. Residues 481-551 (ESKSYGSGSR…RDREREYRHR (71 aa)) form a necessary for interaction with SRSF3, SRSF7 and TRA2B/SFRS10 region. The span at 489-503 (SRRERSRERDHSRSR) shows a compositional bias: basic and acidic residues. The arg/Ser-rich domain stretch occupies residues 490–551 (RRERSRERDH…RDREREYRHR (62 aa)). Phosphoserine is present on residues serine 494, serine 500, serine 511, serine 513, and serine 525. Basic residues predominate over residues 504–514 (EKSRRHKSRSR). Residues 510–551 (KSRSRDRHDDYYRERSRERERHRDRDRDRDRERDREREYRHR) are sufficient for nuclear targeting. The segment covering 515–551 (DRHDDYYRERSRERERHRDRDRDRDRERDREREYRHR) has biased composition (basic and acidic residues).

The protein belongs to the RRM CPSF6/7 family. As to quaternary structure, component of the cleavage factor Im (CFIm) complex which is a heterotetramer composed of two subunits of NUDT21/CPSF5 and two subunits of CPSF6 or CPSF7 or a heterodimer of CPSF6 and CPSF7. The cleavage factor Im (CFIm) complex associates with the CPSF and CSTF complexes to promote the assembly of the core mRNA 3'-processing machinery. Associates with the exon junction complex (EJC). Associates with the 80S ribosome particle. Interacts (via the RRM domain) with NUDT21/CPSF5; this interaction is direct and enhances binding to RNA. Interacts (via Arg/Ser-rich domain) with FIP1L1 (preferentially via unphosphorylated form and Arg/Glu/Asp-rich domain); this interaction mediates, at least in part, the interaction between the CFIm and CPSF complexes and may be inhibited by CPSF6 hyper-phosphorylation. Interacts (via N-terminus) with NXF1; this interaction is direct. Interacts with SRSF3. Interacts with SRSF7. Interacts with SNRNP70. Interacts with TRA2B/SFRS10. Interacts with UPF1. Interacts with UPF3B. Interacts with VIRMA. Interacts (via Arg/Ser-rich domain) with TNPO3; promoting nuclear import of CPSF6 independently of its phosphorylation status. Interacts with YTHDC1. Post-translationally, phosphorylated. Phosphorylated in the Arg/Ser-rich domain by SRPK1, in vitro. Symmetrically dimethylated on arginine residues in the GAR motif by PRMT5 in a WDR77- and CLNS1A-dependent manner. Asymmetrically dimethylated on arginine residues in the GAR motif by PRMT1.

It localises to the nucleus. The protein resides in the nucleoplasm. The protein localises to the nucleus speckle. Its subcellular location is the cytoplasm. Component of the cleavage factor Im (CFIm) complex that functions as an activator of the pre-mRNA 3'-end cleavage and polyadenylation processing required for the maturation of pre-mRNA into functional mRNAs. CFIm contributes to the recruitment of multiprotein complexes on specific sequences on the pre-mRNA 3'-end, so called cleavage and polyadenylation signals (pA signals). Most pre-mRNAs contain multiple pA signals, resulting in alternative cleavage and polyadenylation (APA) producing mRNAs with variable 3'-end formation. The CFIm complex acts as a key regulator of cleavage and polyadenylation site choice during APA through its binding to 5'-UGUA-3' elements localized in the 3'-untranslated region (UTR) for a huge number of pre-mRNAs. CPSF6 enhances NUDT21/CPSF5 binding to 5'-UGUA-3' elements localized upstream of pA signals and promotes RNA looping, and hence activates directly the mRNA 3'-processing machinery. Plays a role in mRNA export. In Bos taurus (Bovine), this protein is Cleavage and polyadenylation specificity factor subunit 6.